Here is a 445-residue protein sequence, read N- to C-terminus: MGITVLKNEGLDFHARISTPLSEIDDDIQKELLDLTKKVKIAGFRAGKVPVSIVKKKYGTSVRNDIIERKINHSVNHVIKEHNLNIIGRPKIEELQNESDKALEFTVKIELLPKITIPDFKKISLDRPKLEVNSKDVEEQLEKLAALTKNYTKESKAKIKAGDQVTIDAIGYIKEKAFKDGKLNDFKVIIGSNALIPGFEKQLIGSKTGSEIDVNVTFPENYHAKDLAGKDARFVVQIKAVHTAEPTVIDDEFAKKFQSNSLEELRTHFTKQIENESEEAINTIMKMNLFDKLEKLLDFDVPESLLEQEKNILKSGTDKNEQDESLLKDKSSKEITAYYNKLALRRVRIGLLLAEYAKSKNLQLEPDDLRKVIMQQARNFPGQENMIFDFYKNNPRAIEGLKGPALEDKAVQYIFNHEIKLKEKKYTKEELEKYLEAEEQRITLI.

Residues 162-247 (GDQVTIDAIG…IKAVHTAEPT (86 aa)) enclose the PPIase FKBP-type domain.

It belongs to the FKBP-type PPIase family. Tig subfamily.

It is found in the cytoplasm. The catalysed reaction is [protein]-peptidylproline (omega=180) = [protein]-peptidylproline (omega=0). Functionally, involved in protein export. Acts as a chaperone by maintaining the newly synthesized protein in an open conformation. Functions as a peptidyl-prolyl cis-trans isomerase. In Rickettsia massiliae (strain Mtu5), this protein is Trigger factor.